We begin with the raw amino-acid sequence, 476 residues long: Bifunctional protein GlmU (476 aa).

A pyrophosphorylase region spans residues 1 to 235 (MTALDIIIMA…ALQVAGVNSP (235 aa)). UDP-N-acetyl-alpha-D-glucosamine is bound by residues Lys-23, Gln-81, 86–87 (GT), 108–110 (SGD), Gly-145, Glu-160, and Asn-233. Position 110 (Asp-110) interacts with Mg(2+). Asn-233 serves as a coordination point for Mg(2+). The tract at residues 236–256 (AQLADLERAHQRAQAAALMEQ) is linker. An N-acetyltransferase region spans residues 257–476 (GVRLADPARF…WKRPAKQAKG (220 aa)). UDP-N-acetyl-alpha-D-glucosamine is bound by residues Arg-351 and Lys-369. His-381 serves as the catalytic Proton acceptor. Residues Tyr-384 and Asn-395 each contribute to the UDP-N-acetyl-alpha-D-glucosamine site. Acetyl-CoA contacts are provided by residues Ala-398, 404 to 405 (NY), Ser-423, Gly-441, and Arg-458.

The protein in the N-terminal section; belongs to the N-acetylglucosamine-1-phosphate uridyltransferase family. This sequence in the C-terminal section; belongs to the transferase hexapeptide repeat family. Homotrimer. It depends on Mg(2+) as a cofactor.

It localises to the cytoplasm. The catalysed reaction is alpha-D-glucosamine 1-phosphate + acetyl-CoA = N-acetyl-alpha-D-glucosamine 1-phosphate + CoA + H(+). It catalyses the reaction N-acetyl-alpha-D-glucosamine 1-phosphate + UTP + H(+) = UDP-N-acetyl-alpha-D-glucosamine + diphosphate. Its pathway is nucleotide-sugar biosynthesis; UDP-N-acetyl-alpha-D-glucosamine biosynthesis; N-acetyl-alpha-D-glucosamine 1-phosphate from alpha-D-glucosamine 6-phosphate (route II): step 2/2. It functions in the pathway nucleotide-sugar biosynthesis; UDP-N-acetyl-alpha-D-glucosamine biosynthesis; UDP-N-acetyl-alpha-D-glucosamine from N-acetyl-alpha-D-glucosamine 1-phosphate: step 1/1. It participates in bacterial outer membrane biogenesis; LPS lipid A biosynthesis. Catalyzes the last two sequential reactions in the de novo biosynthetic pathway for UDP-N-acetylglucosamine (UDP-GlcNAc). The C-terminal domain catalyzes the transfer of acetyl group from acetyl coenzyme A to glucosamine-1-phosphate (GlcN-1-P) to produce N-acetylglucosamine-1-phosphate (GlcNAc-1-P), which is converted into UDP-GlcNAc by the transfer of uridine 5-monophosphate (from uridine 5-triphosphate), a reaction catalyzed by the N-terminal domain. This Acidovorax sp. (strain JS42) protein is Bifunctional protein GlmU.